Consider the following 295-residue polypeptide: Protoheme IX farnesyltransferase (295 aa).

Transmembrane regions (helical) follow at residues 7–27 (VTKP…FLLA), 34–54 (VPLF…GCVF), 78–98 (LIAP…GIAL), 106–126 (LAAL…SLYM), 131–151 (VYGT…GYCA), 161–181 (LILL…IAIF), 207–227 (ITLY…GGYA), 228–248 (GYKY…MALS), and 263–283 (LFMF…VDFQ).

This sequence belongs to the UbiA prenyltransferase family. Protoheme IX farnesyltransferase subfamily.

Its subcellular location is the cell inner membrane. It catalyses the reaction heme b + (2E,6E)-farnesyl diphosphate + H2O = Fe(II)-heme o + diphosphate. It functions in the pathway porphyrin-containing compound metabolism; heme O biosynthesis; heme O from protoheme: step 1/1. In terms of biological role, converts heme B (protoheme IX) to heme O by substitution of the vinyl group on carbon 2 of heme B porphyrin ring with a hydroxyethyl farnesyl side group. This chain is Protoheme IX farnesyltransferase, found in Aeromonas salmonicida (strain A449).